The chain runs to 829 residues: 1,4-alpha-glucan branching enzyme GlgB (829 aa).

Asp405 acts as the Nucleophile in catalysis. The active-site Proton donor is the Glu458. The segment at 758-829 (ASKATKVSTK…TTAKKTKDNA (72 aa)) is disordered. Composition is skewed to low complexity over residues 778–789 (VKAATKSSVTKV) and 810–820 (VTKTAKASAKT).

This sequence belongs to the glycosyl hydrolase 13 family. GlgB subfamily. Monomer.

The enzyme catalyses Transfers a segment of a (1-&gt;4)-alpha-D-glucan chain to a primary hydroxy group in a similar glucan chain.. The protein operates within glycan biosynthesis; glycogen biosynthesis. Its function is as follows. Catalyzes the formation of the alpha-1,6-glucosidic linkages in glycogen by scission of a 1,4-alpha-linked oligosaccharide from growing alpha-1,4-glucan chains and the subsequent attachment of the oligosaccharide to the alpha-1,6 position. The sequence is that of 1,4-alpha-glucan branching enzyme GlgB from Actinobacillus succinogenes (strain ATCC 55618 / DSM 22257 / CCUG 43843 / 130Z).